The primary structure comprises 400 residues: Argininosuccinate synthase (400 aa).

8 to 16 is a binding site for ATP; the sequence is AYSGGLDTS. Tyr87 provides a ligand contact to L-citrulline. Gly117 is a binding site for ATP. 3 residues coordinate L-aspartate: Thr119, Asn123, and Asp124. L-citrulline is bound at residue Asn123. 4 residues coordinate L-citrulline: Arg127, Ser175, Glu260, and Tyr272.

It belongs to the argininosuccinate synthase family. Type 1 subfamily. Homotetramer.

The protein localises to the cytoplasm. The catalysed reaction is L-citrulline + L-aspartate + ATP = 2-(N(omega)-L-arginino)succinate + AMP + diphosphate + H(+). It participates in amino-acid biosynthesis; L-arginine biosynthesis; L-arginine from L-ornithine and carbamoyl phosphate: step 2/3. In Mycolicibacterium vanbaalenii (strain DSM 7251 / JCM 13017 / BCRC 16820 / KCTC 9966 / NRRL B-24157 / PYR-1) (Mycobacterium vanbaalenii), this protein is Argininosuccinate synthase.